The chain runs to 286 residues: Haloalkane dehalogenase 2 (286 aa).

Residues 35 to 134 (PPILLCHGNP…RVRGVVLGNT (100 aa)) form the AB hydrolase-1 domain. The active-site Nucleophile is Asp109. Asp238 serves as the catalytic Proton donor. His267 (proton acceptor) is an active-site residue.

It belongs to the haloalkane dehalogenase family. Type 1 subfamily. In terms of assembly, monomer.

It carries out the reaction 1-haloalkane + H2O = a halide anion + a primary alcohol + H(+). Its function is as follows. Catalyzes hydrolytic cleavage of carbon-halogen bonds in halogenated aliphatic compounds, leading to the formation of the corresponding primary alcohols, halide ions and protons. The sequence is that of Haloalkane dehalogenase 2 (dhmA2) from Mycobacterium bovis (strain ATCC BAA-935 / AF2122/97).